The following is a 1337-amino-acid chain: Receptor-type tyrosine-protein phosphatase eta (1337 aa).

Positions 1–35 are cleaved as a signal peptide; the sequence is MKPAAREARLPPRSPGLRWALPLLLLLLRLGQILC. The Extracellular portion of the chain corresponds to 36-975; it reads AGGTPSPIPD…LPQDPGVICG (940 aa). 2 stretches are compositionally biased toward polar residues: residues 67–82 and 89–119; these read SFHK…VETN and SSGA…STGP. Residues 67–124 form a disordered region; that stretch reads SFHKQNGTGTPQVETNTSEDGESSGANDSLRTPEQGSNGTDGASQKTPSSTGPSPVFD. 34 N-linked (GlcNAc...) asparagine glycosylation sites follow: N72, N82, N93, N104, N142, N172, N192, N231, N258, N278, N342, N351, N376, N391, N396, N413, N431, N501, N525, N536, N582, N603, N618, N628, N637, N666, N669, N761, N772, N784, N790, N824, N910, and N937. 9 consecutive Fibronectin type-III domains span residues 121-209, 207-291, 271-364, 368-456, 457-541, 542-623, 625-720, 721-817, and 816-902; these read PVFD…EPIP, PIPV…EGGL, NPYL…EFRT, QVFD…PPVP, VSDF…TVPS, AVFD…TAQY, RPSN…TDPA, SMAS…TDPP, and PPPP…SEVL. Residues 278–327 form a disordered region; the sequence is NKTKGDPLGTEGGLDASNTERSRAGSPTAPVHDESLVGPVDPSSGQQSRD. A helical membrane pass occupies residues 976–996; the sequence is AVFGCIFGALVIVTVGGFIFW. Over 997-1337 the chain is Cytoplasmic; sequence RKKRKDAKNN…TFGKTNGYIA (341 aa). S1009 carries the post-translational modification Phosphoserine. One can recognise a Tyrosine-protein phosphatase domain in the interval 1041-1298; that stretch reads FAEEYEDLKL…VFLNQCVLDI (258 aa). Substrate contacts are provided by residues D1205, 1239-1245, and Q1283; that span reads CSAGVGR. C1239 serves as the catalytic Phosphocysteine intermediate.

Belongs to the protein-tyrosine phosphatase family. Receptor class 3 subfamily. As to quaternary structure, monomer. Interacts with CTNNB1 (phosphorylated) and JUP (phosphorylated). Interacts with FLT3 (phosphorylated). Interacts with GAB1 and GRB2. Post-translationally, N- and O-glycosylated. In terms of processing, N-glycosylated. In terms of tissue distribution, expressed in the promyelocytic cell line HL-60, the granulocyte-macrophage colony-stimulating factor-dependent leukemic cell line F-36P, and the IL3 and erythropoietin-dependent leukemic cell line F-36E. Expressed predominantly in epithelial cells and lymphocytes. Enhanced expression at high cell density. As to expression, expressed in the brain.

The protein localises to the cell membrane. The protein resides in the cell projection. It localises to the ruffle membrane. Its subcellular location is the cell junction. It is found in the secreted. The protein localises to the extracellular space. The catalysed reaction is O-phospho-L-tyrosyl-[protein] + H2O = L-tyrosyl-[protein] + phosphate. Tyrosine phosphatase which dephosphorylates or contributes to the dephosphorylation of CTNND1, FLT3, PDGFRB, MET, KDR, LYN, SRC, MAPK1, MAPK3, EGFR, TJP1, OCLN, PIK3R1 and PIK3R2. Plays a role in cell adhesion, migration, proliferation and differentiation. Has a role in megakaryocytes and platelet formation. Involved in vascular development. Regulator of macrophage adhesion and spreading. Positively affects cell-matrix adhesion. Positive regulator of platelet activation and thrombosis. Negative regulator of cell proliferation. Negative regulator of PDGF-stimulated cell migration; through dephosphorylation of PDGFR. Positive regulator of endothelial cell survival, as well as of VEGF-induced SRC and AKT activation; through KDR dephosphorylation. Negative regulator of EGFR signaling pathway; through EGFR dephosphorylation. Enhances the barrier function of epithelial junctions during reassembly. Negatively regulates T-cell receptor (TCR) signaling. Upon T-cell TCR activation, it is up-regulated and excluded from the immunological synapses, while upon T-cell-antigen presenting cells (APC) disengagement, it is no longer excluded and can dephosphorylate PLCG1 and LAT to down-regulate prolongation of signaling. Its function is as follows. Activates angiogenesis and cell migration. Downregulates the expression of the endothelial adhesion molecules ICAM1 and VCAM1. This is Receptor-type tyrosine-protein phosphatase eta (PTPRJ) from Homo sapiens (Human).